The sequence spans 443 residues: COP9 signalosome complex subunit 2 (443 aa).

One can recognise a PCI domain in the interval 254–416 (AHTDFFEAFK…QLLELDHQKR (163 aa)).

This sequence belongs to the CSN2 family. As to quaternary structure, component of the CSN complex, probably composed of cops1, cops2, cops3, cops4, cops5, cops6, cops7, cops8 and cops9.

The protein resides in the cytoplasm. It is found in the nucleus. In terms of biological role, essential component of the COP9 signalosome complex (CSN), a complex involved in various cellular and developmental processes. The CSN complex is an essential regulator of the ubiquitin (Ubl) conjugation pathway by mediating the deneddylation of the cullin subunits of E3 ligase complexes, leading to modify the Ubl ligase activity. In Danio rerio (Zebrafish), this protein is COP9 signalosome complex subunit 2 (cops2).